A 308-amino-acid chain; its full sequence is Methionyl-tRNA formyltransferase (308 aa).

111 to 114 (SLLP) provides a ligand contact to (6S)-5,6,7,8-tetrahydrofolate.

It belongs to the Fmt family.

It catalyses the reaction L-methionyl-tRNA(fMet) + (6R)-10-formyltetrahydrofolate = N-formyl-L-methionyl-tRNA(fMet) + (6S)-5,6,7,8-tetrahydrofolate + H(+). Attaches a formyl group to the free amino group of methionyl-tRNA(fMet). The formyl group appears to play a dual role in the initiator identity of N-formylmethionyl-tRNA by promoting its recognition by IF2 and preventing the misappropriation of this tRNA by the elongation apparatus. This chain is Methionyl-tRNA formyltransferase, found in Thermodesulfovibrio yellowstonii (strain ATCC 51303 / DSM 11347 / YP87).